The chain runs to 249 residues: uncharacterized protein (249 aa).

It is found in the cytoplasm. The protein localises to the nucleus. This is an uncharacterized protein from Schizosaccharomyces pombe (strain 972 / ATCC 24843) (Fission yeast).